Consider the following 425-residue polypeptide: Nucleoporin nup45 (425 aa).

Residues 1 to 10 (MFGLNKTPSF) are compositionally biased toward polar residues. A disordered region spans residues 1 to 207 (MFGLNKTPSF…GFGLSNNTQT (207 aa)). Low complexity predominate over residues 11 to 27 (GSTGTQNQNTGTSAGTG). The segment covering 28 to 45 (LFSSNTFGNNTQANTPAS) has biased composition (polar residues). Residues 47-56 (GFGGVTGGAF) show a composition bias toward gly residues. The segment covering 72–89 (PNATSTTPGLNLFGQNPQ) has biased composition (polar residues). 2 stretches are compositionally biased toward low complexity: residues 112-126 (NQNQ…AAPT) and 135-150 (QNQT…ANTS). Polar residues predominate over residues 167 to 207 (NRPNTSTFGQFSTQPASAGLFGQSTQPSGSTGFGLSNNTQT). Phosphoserine occurs at positions 289 and 290.

The protein resides in the cytoplasm. The protein localises to the nucleus. It localises to the nuclear pore complex. Functionally, functions as a component of the nuclear pore complex (NPC). NPC components, collectively referred to as nucleoporins (NUPs), can play the role of both NPC structural components and of docking or interaction partners for transiently associated nuclear transport factors. Active directional transport is assured by both, a Phe-Gly (FG) repeat affinity gradient for these transport factors across the NPC and a transport cofactor concentration gradient across the nuclear envelope. This chain is Nucleoporin nup45 (nup45), found in Schizosaccharomyces pombe (strain 972 / ATCC 24843) (Fission yeast).